Here is a 462-residue protein sequence, read N- to C-terminus: Putative E3 ubiquitin-protein ligase XBAT35 (462 aa).

ANK repeat units follow at residues 6-35 (SKGE…DLEW), 39-69 (EGKT…NVNA), and 75-104 (HAGT…NPLV). Disordered regions lie at residues 277–341 (HPPV…GKAS) and 356–402 (SSPS…EGER). Residues 304 to 317 (SLHTTMSDPSNLNH) show a composition bias toward polar residues. Over residues 319-341 (SIGQASSSSGPSSSTAPPSGKAS) the composition is skewed to low complexity. The segment at 411–450 (CAICLDAPSEAVCVPCGHVAGCMSCLKEIKSKNWGCPVCR) adopts an RING-type zinc-finger fold.

It carries out the reaction S-ubiquitinyl-[E2 ubiquitin-conjugating enzyme]-L-cysteine + [acceptor protein]-L-lysine = [E2 ubiquitin-conjugating enzyme]-L-cysteine + N(6)-ubiquitinyl-[acceptor protein]-L-lysine.. The protein operates within protein modification; protein ubiquitination. Functionally, no E3 ubiquitin-protein ligase activity observed when associated with the E2 enzyme UBC8 in vitro. The sequence is that of Putative E3 ubiquitin-protein ligase XBAT35 (XBAT35) from Arabidopsis thaliana (Mouse-ear cress).